A 656-amino-acid chain; its full sequence is Vi polysaccharide export protein VexE (656 aa).

In terms of biological role, may be involved in translocation of the Vi antigen. This is Vi polysaccharide export protein VexE (vexE) from Salmonella typhi.